A 189-amino-acid chain; its full sequence is Orotate phosphoribosyltransferase (189 aa).

5-phospho-alpha-D-ribose 1-diphosphate-binding positions include arginine 94, lysine 95, lysine 98, and 120–128 (EDVTTTGGS). Threonine 124 and arginine 152 together coordinate orotate.

This sequence belongs to the purine/pyrimidine phosphoribosyltransferase family. PyrE subfamily. In terms of assembly, homodimer. Requires Mg(2+) as cofactor.

The catalysed reaction is orotidine 5'-phosphate + diphosphate = orotate + 5-phospho-alpha-D-ribose 1-diphosphate. It participates in pyrimidine metabolism; UMP biosynthesis via de novo pathway; UMP from orotate: step 1/2. Catalyzes the transfer of a ribosyl phosphate group from 5-phosphoribose 1-diphosphate to orotate, leading to the formation of orotidine monophosphate (OMP). The protein is Orotate phosphoribosyltransferase of Thermococcus gammatolerans (strain DSM 15229 / JCM 11827 / EJ3).